Reading from the N-terminus, the 327-residue chain is GDP-mannose transporter (327 aa).

The Cytoplasmic portion of the chain corresponds to 1-4 (MESS). Residues 5–25 (LAAIANSGPISIFSYCVSSIL) form a helical membrane-spanning segment. The Lumenal portion of the chain corresponds to 26–36 (MTVTNKYVLSG). A helical membrane pass occupies residues 37–57 (FSFNMNFLLLAVQSIVCIVTI). Over 58–78 (GSLKSFGVITYRQFNKEEARK) the chain is Cytoplasmic. Residues 79–93 (WSPIAVLLVIMIYTS) traverse the membrane as a helical segment. Over 94–102 (SKALQYLSI) the chain is Lumenal. A helical transmembrane segment spans residues 103-125 (PVYTIFKNLTIILIAYGEVLWFG). At 126–131 (GKVTTM) the chain is on the cytoplasmic side. The chain crosses the membrane as a helical span at residues 132 to 149 (ALSSFLLMVFSSVVAWYG). Residues 150 to 163 (DEAVSGSGNESFIA) lie on the Lumenal side of the membrane. A glycan (N-linked (GlcNAc...) asparagine) is linked at Asn-158. A helical transmembrane segment spans residues 164–184 (LYLGYFWMATNCFASAAFVLI). Over 185 to 207 (MRKRIKLTNFKDFDTMYYNNLLS) the chain is Cytoplasmic. Residues 208–228 (IPILLASSIIFEDWSAENLAV) form a helical membrane-spanning segment. The Lumenal segment spans residues 229-238 (NFPSDNRTAT). N-linked (GlcNAc...) asparagine glycosylation is present at Asn-234. A helical membrane pass occupies residues 239–259 (IAAMVLSGASSVGISYCSAWC). Residues 260 to 266 (VRVTSST) lie on the Cytoplasmic side of the membrane. The helical transmembrane segment at 267 to 289 (TYSMVGALNKLPIALSGLVFFPA) threads the bilayer. Over 290–292 (AVN) the chain is Lumenal. A helical membrane pass occupies residues 293 to 312 (FWSVASIFVGFAAGLVYAVA). At 313-327 (KQRQQKENVSLPSSK) the chain is on the cytoplasmic side.

It belongs to the TPT transporter family. SLC35D subfamily. Homooligomer.

Its subcellular location is the golgi apparatus membrane. It localises to the cytoplasmic vesicle membrane. The protein localises to the endoplasmic reticulum membrane. Involved in the import of GDP-mannose from the cytoplasm into the Golgi lumen. The chain is GDP-mannose transporter (VRG4) from Scheffersomyces stipitis (strain ATCC 58785 / CBS 6054 / NBRC 10063 / NRRL Y-11545) (Yeast).